Consider the following 198-residue polypeptide: Endonuclease V (198 aa).

Residues aspartate 38 and aspartate 101 each coordinate Mg(2+).

The protein belongs to the endonuclease V family. It depends on Mg(2+) as a cofactor.

It is found in the cytoplasm. The catalysed reaction is Endonucleolytic cleavage at apurinic or apyrimidinic sites to products with a 5'-phosphate.. Functionally, DNA repair enzyme involved in the repair of deaminated bases. Selectively cleaves double-stranded DNA at the second phosphodiester bond 3' to a deoxyinosine leaving behind the intact lesion on the nicked DNA. The sequence is that of Endonuclease V from Saccharolobus islandicus (strain M.16.27) (Sulfolobus islandicus).